Reading from the N-terminus, the 113-residue chain is DNA-directed RNA polymerase subunit Rpo4 (113 aa).

The protein belongs to the eukaryotic RPB4 RNA polymerase subunit family. As to quaternary structure, part of the 13-subunit RNA polymerase complex. Forms a stalk with Rpo7 that extends from the main structure.

The protein localises to the cytoplasm. The catalysed reaction is RNA(n) + a ribonucleoside 5'-triphosphate = RNA(n+1) + diphosphate. In terms of biological role, DNA-dependent RNA polymerase (RNAP) catalyzes the transcription of DNA into RNA using the four ribonucleoside triphosphates as substrates. This subunit is less well bound than the others. This is DNA-directed RNA polymerase subunit Rpo4 from Saccharolobus solfataricus (strain ATCC 35092 / DSM 1617 / JCM 11322 / P2) (Sulfolobus solfataricus).